The chain runs to 328 residues: Ribosomal RNA small subunit methyltransferase H (328 aa).

S-adenosyl-L-methionine contacts are provided by residues 64-66 (GGH), aspartate 83, phenylalanine 112, aspartate 129, and glutamine 136.

It belongs to the methyltransferase superfamily. RsmH family.

The protein localises to the cytoplasm. The enzyme catalyses cytidine(1402) in 16S rRNA + S-adenosyl-L-methionine = N(4)-methylcytidine(1402) in 16S rRNA + S-adenosyl-L-homocysteine + H(+). Specifically methylates the N4 position of cytidine in position 1402 (C1402) of 16S rRNA. The chain is Ribosomal RNA small subunit methyltransferase H from Bdellovibrio bacteriovorus (strain ATCC 15356 / DSM 50701 / NCIMB 9529 / HD100).